The sequence spans 476 residues: Serine/threonine-protein kinase Chk1 (476 aa).

An interaction with CLSPN region spans residues 1–265 (MAVPFVEDWD…IPDIKKDRWY (265 aa)). Positions 9 to 265 (WDLVQTLGEG…IPDIKKDRWY (257 aa)) constitute a Protein kinase domain. ATP-binding positions include 15-23 (LGEGAYGEV) and lysine 38. Catalysis depends on aspartate 130, which acts as the Proton acceptor. Residue lysine 132 forms a Glycyl lysine isopeptide (Lys-Gly) (interchain with G-Cter in ubiquitin) linkage. Positions 270 to 327 (KKGAKRPRVTSGGVSESPSGFSKHIQSNLDFSPVNSASSEENVKYSSSQPEPRTGLSL) are disordered. Serine 280, serine 286, serine 296, and serine 301 each carry phosphoserine. The segment covering 281 to 320 (GGVSESPSGFSKHIQSNLDFSPVNSASSEENVKYSSSQPE) has biased composition (polar residues). Serine 317 carries the post-translational modification Phosphoserine; by ATM and ATR. Serine 331 carries the phosphoserine modification. Serine 345 carries the post-translational modification Phosphoserine; by ATM and ATR. Residues 391 to 476 (QCLKETCEKL…SSQKIWLPAT (86 aa)) form an autoinhibitory region region. A Glycyl lysine isopeptide (Lys-Gly) (interchain with G-Cter in ubiquitin) cross-link involves residue lysine 436. Residues serine 467 and serine 468 each carry the phosphoserine modification.

The protein belongs to the protein kinase superfamily. CAMK Ser/Thr protein kinase family. NIM1 subfamily. In terms of assembly, interacts (phosphorylated by ATR) with RAD51. Interacts with and phosphorylates CLSPN, an adapter protein that regulates the ATR-dependent phosphorylation of CHEK1. Interacts with BRCA1. Interacts with and phosphorylates CDC25A, CDC25B and CDC25C. Interacts with FBXO6, which regulates CHEK1. Interacts with PPM1D, which regulates CHEK1 through dephosphorylation. Interacts with TIMELESS; DNA damage-dependent. Interacts with FEM1B; activates CHEK1 in response to stress. Interacts with TLK1. Interacts with XPO1 and YWHAZ. Interacts with CDK5RAP3; antagonizes CHEK1. Isoform 1 associates with isoform 2, the interaction is disrupted upon phosphorylation by ATR. Post-translationally, phosphorylated by ATR in a RAD17-dependent manner in response to ultraviolet irradiation and inhibition of DNA replication. Phosphorylated by ATM in response to ionizing irradiation. ATM and ATR can both phosphorylate Ser-317 and Ser-345 and this results in enhanced kinase activity. Phosphorylation at Ser-345 induces a change in the conformation of the protein, activates the kinase activity and is a prerequisite for interaction with FBXO6 and subsequent ubiquitination at Lys-436. Phosphorylation at Ser-345 also increases binding to 14-3-3 proteins and promotes nuclear retention. Conversely, dephosphorylation at Ser-345 by PPM1D may contribute to exit from checkpoint mediated cell cycle arrest. Phosphorylation at Ser-280 by AKT1/PKB, may promote mono and/or diubiquitination. Also phosphorylated at undefined residues during mitotic arrest, resulting in decreased activity. Ubiquitinated. Mono or diubiquitination promotes nuclear exclusion. The activated form (phosphorylated on Ser-345) is polyubiquitinated at Lys-436 by some SCF-type E3 ubiquitin ligase complex containing FBXO6 promoting its degradation. Ubiquitination and degradation are required to terminate the checkpoint and ensure that activated CHEK1 does not accumulate as cells progress through S phase, when replication forks encounter transient impediments during normal DNA replication. 'Lys-63'-mediated ubiquitination by TRAF4 at Lys-132 activates cell cycle arrest and activation of DNA repair. In terms of processing, proteolytically cleaved at the C-terminus by SPRTN during normal DNA replication, thereby promoting CHEK1 removal from chromatin and activating the protein kinase activity. As to expression, expressed ubiquitously with the most abundant expression in thymus, testis, small intestine and colon.

The protein resides in the nucleus. The protein localises to the chromosome. It localises to the cytoplasm. It is found in the cytoskeleton. Its subcellular location is the microtubule organizing center. The protein resides in the centrosome. The enzyme catalyses L-seryl-[protein] + ATP = O-phospho-L-seryl-[protein] + ADP + H(+). It carries out the reaction L-threonyl-[protein] + ATP = O-phospho-L-threonyl-[protein] + ADP + H(+). Its activity is regulated as follows. Activated through phosphorylation predominantly by ATR but also by ATM in response to DNA damage or inhibition of DNA replication. Activation is modulated by several mediators including CLSPN, BRCA1 and FEM1B. Proteolytic cleavage at the C-terminus by SPRTN during normal DNA replication activates the protein kinase activity. Its function is as follows. Serine/threonine-protein kinase which is required for checkpoint-mediated cell cycle arrest and activation of DNA repair in response to the presence of DNA damage or unreplicated DNA. May also negatively regulate cell cycle progression during unperturbed cell cycles. This regulation is achieved by a number of mechanisms that together help to preserve the integrity of the genome. Recognizes the substrate consensus sequence [R-X-X-S/T]. Binds to and phosphorylates CDC25A, CDC25B and CDC25C. Phosphorylation of CDC25A at 'Ser-178' and 'Thr-507' and phosphorylation of CDC25C at 'Ser-216' creates binding sites for 14-3-3 proteins which inhibit CDC25A and CDC25C. Phosphorylation of CDC25A at 'Ser-76', 'Ser-124', 'Ser-178', 'Ser-279' and 'Ser-293' promotes proteolysis of CDC25A. Phosphorylation of CDC25A at 'Ser-76' primes the protein for subsequent phosphorylation at 'Ser-79', 'Ser-82' and 'Ser-88' by NEK11, which is required for polyubiquitination and degradation of CDCD25A. Inhibition of CDC25 leads to increased inhibitory tyrosine phosphorylation of CDK-cyclin complexes and blocks cell cycle progression. Also phosphorylates NEK6. Binds to and phosphorylates RAD51 at 'Thr-309', which promotes the release of RAD51 from BRCA2 and enhances the association of RAD51 with chromatin, thereby promoting DNA repair by homologous recombination. Phosphorylates multiple sites within the C-terminus of TP53, which promotes activation of TP53 by acetylation and promotes cell cycle arrest and suppression of cellular proliferation. Also promotes repair of DNA cross-links through phosphorylation of FANCE. Binds to and phosphorylates TLK1 at 'Ser-743', which prevents the TLK1-dependent phosphorylation of the chromatin assembly factor ASF1A. This may enhance chromatin assembly both in the presence or absence of DNA damage. May also play a role in replication fork maintenance through regulation of PCNA. May regulate the transcription of genes that regulate cell-cycle progression through the phosphorylation of histones. Phosphorylates histone H3.1 (to form H3T11ph), which leads to epigenetic inhibition of a subset of genes. May also phosphorylate RB1 to promote its interaction with the E2F family of transcription factors and subsequent cell cycle arrest. Phosphorylates SPRTN, promoting SPRTN recruitment to chromatin. Reduces replication stress and activates the G2/M checkpoint, by phosphorylating and inactivating PABIR1/FAM122A and promoting the serine/threonine-protein phosphatase 2A-mediated dephosphorylation and stabilization of WEE1 levels and activity. In terms of biological role, endogenous repressor of isoform 1, interacts with, and antagonizes CHK1 to promote the S to G2/M phase transition. In Homo sapiens (Human), this protein is Serine/threonine-protein kinase Chk1 (CHEK1).